A 165-amino-acid chain; its full sequence is Aspartate carbamoyltransferase regulatory chain (165 aa).

Cysteine 121, cysteine 126, cysteine 149, and cysteine 152 together coordinate Zn(2+).

Belongs to the PyrI family. In terms of assembly, contains catalytic and regulatory chains. Zn(2+) is required as a cofactor.

Functionally, involved in allosteric regulation of aspartate carbamoyltransferase. This is Aspartate carbamoyltransferase regulatory chain from Methanoregula boonei (strain DSM 21154 / JCM 14090 / 6A8).